Here is a 78-residue protein sequence, read N- to C-terminus: Rubredoxin (78 aa).

The region spanning 23–74 is the Rubredoxin-like domain; that stretch reads DARLECKICWWEYDPEVGDPVWQIAPGTSFSALPAHWRCPNCDGEAEQFMVL. Residues cysteine 28, cysteine 31, cysteine 61, and cysteine 64 each contribute to the Fe cation site.

Belongs to the rubredoxin family. Fe(3+) is required as a cofactor.

Its function is as follows. Rubredoxin is a small nonheme, iron protein lacking acid-labile sulfide. Its single Fe, chelated to 4 Cys, functions as an electron acceptor and may also stabilize the conformation of the molecule. Could be involved in hydrogenase-linked redox processes. The polypeptide is Rubredoxin (hoxR) (Cupriavidus necator (strain ATCC 17699 / DSM 428 / KCTC 22496 / NCIMB 10442 / H16 / Stanier 337) (Ralstonia eutropha)).